The following is a 334-amino-acid chain: UL-16 binding protein 5 (334 aa).

A signal peptide spans 1-25 (MAAAASPAFLLRLPLLLLLSSWCRT). Over 26–223 (GLADPHSLCY…TMSSGTAQPR (198 aa)) the chain is Extracellular. Residues 29-117 (DPHSLCYDIT…IQLENYIPKE (89 aa)) are MHC class I alpha-1 like. Residues Cys-50 and Cys-66 are joined by a disulfide bond. Asn-82 carries N-linked (GlcNAc...) asparagine glycosylation. An MHC class I alpha-2 like region spans residues 118-210 (PLTLQARMSC…MDSTLEPSAG (93 aa)). A disulfide bridge connects residues Cys-127 and Cys-190. Gly-218 carries the GPI-anchor amidated glycine lipid modification. A propeptide spans 219–334 (TAQPRATATT…YSEPLQVSIS (116 aa)) (removed in mature form). The helical transmembrane segment at 224–243 (ATATTLILCCLLIMCLLICS) threads the bilayer. Topologically, residues 244-334 (RHSLTQSHGH…YSEPLQVSIS (91 aa)) are cytoplasmic.

It belongs to the MHC class I family. In terms of assembly, interacts with KLRK1/NKG2D. (Microbial infection) In CMV-infected cells, interacts with the viral glycoprotein UL16; this interaction causes RAET1G retention in the endoplasmic reticulum and cis-Golgi and prevents binding to and activation of KLRK1/NKG2D, providing CMV with an immune evasion mechanism. Post-translationally, the functional form is cleaved C-terminally of the GPI-anchor and yields a 28 kDa protein. In terms of tissue distribution, isoform 1 is highly expressed in colon and in a number of tumor cell lines and highly restricted in normal tissues. Both isoforms are frequently expressed in cell lines derived from epithelial cancers, and in primary breast cancers.

The protein localises to the cell membrane. The protein resides in the endoplasmic reticulum. Its subcellular location is the secreted. Binds and activates the KLRK1/NKG2D receptor, mediating natural killer cell cytotoxicity. In terms of biological role, down-regulates the expression of KLRK1 and stimulates natural killer cells to secrete IFNG. Functionally, stimulates natural killer cells to secrete IFNG. The chain is UL-16 binding protein 5 from Homo sapiens (Human).